Here is a 647-residue protein sequence, read N- to C-terminus: Probable cobalt/nickel-exporting P-type ATPase (647 aa).

A run of 5 helical transmembrane segments spans residues 33-53, 55-75, 94-114, 260-280, and 291-311; these read WAAA…LGAP, AVVW…PAWV, AAIG…IVIF, AGVV…GADL, and MIVA…LSAI. Asp-339 functions as the 4-aspartylphosphate intermediate in the catalytic mechanism. Residues Asp-532 and Asp-536 each coordinate Mg(2+). A helical transmembrane segment spans residues 587 to 607; the sequence is VIANLVMAGAAITTLVLWDLF.

Belongs to the cation transport ATPase (P-type) (TC 3.A.3) family. Type IB subfamily.

It is found in the cell membrane. It catalyses the reaction Ni(2+)(out) + ATP + H2O = Ni(2+)(in) + ADP + phosphate + H(+). The enzyme catalyses Co(2+)(out) + ATP + H2O = Co(2+)(in) + ADP + phosphate + H(+). In terms of biological role, involved in heavy metal homeostasis. Probably exports nickel and cobalt ions out of the cell. This is Probable cobalt/nickel-exporting P-type ATPase (ctpD) from Mycolicibacterium smegmatis (strain ATCC 700084 / mc(2)155) (Mycobacterium smegmatis).